A 383-amino-acid polypeptide reads, in one-letter code: Chitinase-3-like protein 1 (383 aa).

The first 21 residues, 1–21 (MGLRAAHTGFVVLVLLQSCAA), serve as a signal peptide directing secretion. The region spanning 22-383 (YKLICYYTSW…SAIKDVLARV (362 aa)) is the GH18 domain. Cys-26 and Cys-51 are joined by a disulfide. Asn-60 carries N-linked (GlcNAc...) asparagine glycosylation. Chitin-binding positions include 70–71 (EW), 97–100 (GGWN), Tyr-141, 204–207 (LTYD), and Arg-263. Cysteines 300 and 364 form a disulfide. The tract at residues 324 to 338 (QWVAYDDQESVKNKA) is important for AKT1 activation and IL8 production. Residue Trp-352 participates in chitin binding. A glycan (N-linked (GlcNAc...) asparagine) is linked at Asn-367.

Belongs to the glycosyl hydrolase 18 family. Monomer. Post-translationally, glycosylated. As to expression, mammary secretions collected during the non-lactating period.

The protein localises to the secreted. Its subcellular location is the extracellular space. It is found in the cytoplasm. The protein resides in the perinuclear region. It localises to the endoplasmic reticulum. Its function is as follows. Carbohydrate-binding lectin with a preference for chitin. Has no chitinase activity. May play a role in tissue remodeling and in the capacity of cells to respond to and cope with changes in their environment. Plays a role in T-helper cell type 2 (Th2) inflammatory response and IL-13-induced inflammation, regulating allergen sensitization, inflammatory cell apoptosis, dendritic cell accumulation and M2 macrophage differentiation. Facilitates invasion of pathogenic enteric bacteria into colonic mucosa and lymphoid organs. Mediates activation of AKT1 signaling pathway and subsequent IL8 production in colonic epithelial cells. Regulates antibacterial responses in lung by contributing to macrophage bacterial killing, controlling bacterial dissemination and augmenting host tolerance. Also regulates hyperoxia-induced injury, inflammation and epithelial apoptosis in lung. The sequence is that of Chitinase-3-like protein 1 (CHI3L1) from Bos taurus (Bovine).